Consider the following 476-residue polypeptide: H2.0-like homeobox protein (476 aa).

Disordered regions lie at residues 120 to 169 (QHLP…PSSK), 328 to 401 (WRHS…HQTT), and 413 to 476 (TASS…LAGL). Low complexity-rich tracts occupy residues 123 to 134 (PQQSPTQQQQPQ) and 158 to 168 (HHSGSAPAPSS). Residues 273–332 (RSWSRAVFSNLQRKGLEKRFEIQKYVTKPDRKQLAAMLGLTDAQVKVWFQNRRMKWRHSK) constitute a DNA-binding region (homeobox). Basic and acidic residues-rich tracts occupy residues 331 to 346 (SKEA…EAGE) and 355 to 368 (EGER…RSEG). Positions 369 to 379 (EAESESSDSES) are enriched in acidic residues. Positions 386 to 397 (DTERTEGTERSL) are enriched in basic and acidic residues. Residues 413–434 (TASSSTSGSSFSFSSTSSLGSG) show a composition bias toward low complexity. 2 stretches are compositionally biased toward polar residues: residues 435-446 (NTHVGSASSLGG) and 455-467 (HQPS…QSPE).

The protein belongs to the H2.0 homeobox family. In terms of tissue distribution, expressed in Th1 cells, CD8-positive T-cells, B-cells and NK cells.

Its subcellular location is the nucleus. Transcription factor required for TBX21/T-bet-dependent maturation of Th1 cells as well as maintenance of Th1-specific gene expression. Involved in embryogenesis and hematopoiesis. In Mus musculus (Mouse), this protein is H2.0-like homeobox protein (Hlx).